The primary structure comprises 276 residues: Rhomboid protease GlpG (276 aa).

6 consecutive transmembrane segments (helical) span residues 94–114, 142–162, 168–188, 193–213, 229–249, and 250–270; these read AGPL…LMQI, ALLH…WYLG, VLGT…SGWA, SGTY…YVWL, LMAF…GMSI, and ANAA…WDTY. The active-site Nucleophile is Ser-201. Residue His-254 is part of the active site.

The protein belongs to the peptidase S54 family.

It localises to the cell inner membrane. It carries out the reaction Cleaves type-1 transmembrane domains using a catalytic dyad composed of serine and histidine that are contributed by different transmembrane domains.. Its function is as follows. Rhomboid-type serine protease that catalyzes intramembrane proteolysis. The chain is Rhomboid protease GlpG from Pectobacterium atrosepticum (strain SCRI 1043 / ATCC BAA-672) (Erwinia carotovora subsp. atroseptica).